A 261-amino-acid polypeptide reads, in one-letter code: V-type proton ATPase subunit D (261 aa).

Phosphoserine is present on Ser241.

It belongs to the V-ATPase D subunit family. In terms of assembly, V-ATPase is a heteromultimeric enzyme composed of a peripheral catalytic V1 complex (components A to H) attached to an integral membrane V0 proton pore complex (components: a, c, c'', d and e).

It localises to the vacuole membrane. In terms of biological role, subunit of the peripheral V1 complex of vacuolar ATPase. V-ATPase is responsible for acidifying a variety of intracellular compartments in eukaryotic cells, thus providing most of the energy required for transport processes in the vacuolar system. This chain is V-type proton ATPase subunit D (VHA-D), found in Arabidopsis thaliana (Mouse-ear cress).